Here is a 194-residue protein sequence, read N- to C-terminus: Putative adenylate kinase (194 aa).

ATP is bound by residues Gly-16, Gly-18, Lys-19, Thr-20, and Thr-21. Positions 36 to 59 (SVGELLAGTPYVTYIPELDTYEIV) are NMP. An LID region spans residues 108-118 (RRGWPLKKILD). Position 109 (Arg-109) interacts with ATP.

The protein belongs to the adenylate kinase family. AK6 subfamily. As to quaternary structure, interacts with uS11. Not a structural component of 40S pre-ribosomes, but transiently interacts with them by binding to uS11.

It catalyses the reaction AMP + ATP = 2 ADP. The catalysed reaction is ATP + H2O = ADP + phosphate + H(+). Broad-specificity nucleoside monophosphate (NMP) kinase that catalyzes the reversible transfer of the terminal phosphate group between nucleoside triphosphates and monophosphates. Also has ATPase activity. Involved in the late maturation steps of the 30S ribosomal particles, specifically 16S rRNA maturation. While NMP activity is not required for ribosome maturation, ATPase activity is. Associates transiently with small ribosomal subunit protein uS11. ATP hydrolysis breaks the interaction with uS11. May temporarily remove uS11 from the ribosome to enable a conformational change of the ribosomal RNA that is needed for the final maturation step of the small ribosomal subunit. The protein is Putative adenylate kinase of Pyrobaculum aerophilum (strain ATCC 51768 / DSM 7523 / JCM 9630 / CIP 104966 / NBRC 100827 / IM2).